A 459-amino-acid polypeptide reads, in one-letter code: uncharacterized protein (459 aa).

Positions 2–60 constitute a TRAM domain; that stretch reads NLRVKQKIPLKIKRMGINGEGIGFYKRTLVFVPGALKGEEIFCQITSVKHNFVQARLLT. Residues cysteine 73, cysteine 79, cysteine 82, and cysteine 162 each contribute to the [4Fe-4S] cluster site. 4 residues coordinate S-adenosyl-L-methionine: glutamine 284, tyrosine 313, aspartate 334, and aspartate 382. The Nucleophile role is filled by cysteine 409.

It belongs to the class I-like SAM-binding methyltransferase superfamily. RNA M5U methyltransferase family.

This is an uncharacterized protein from Streptococcus mutans serotype c (strain ATCC 700610 / UA159).